Consider the following 164-residue polypeptide: UPF0304 protein Asuc_0543 (164 aa).

Belongs to the UPF0304 family.

In Actinobacillus succinogenes (strain ATCC 55618 / DSM 22257 / CCUG 43843 / 130Z), this protein is UPF0304 protein Asuc_0543.